The following is a 631-amino-acid chain: E3 ubiquitin-protein ligase Zswim2 (631 aa).

Residues 54–87 form an SWIM-type zinc finger; the sequence is FRVLLGNPHECSCPTFLKRGELCKHICWVLLKKF. Positions 139 to 348 are UBE2D1-binding; sequence KDINAGDICP…APGYQCRLCL (210 aa). The RING-type 1 zinc-finger motif lies at 147 to 199; it reads CPICQEVLLEKKLPVTFCRFGCGNNVHIKCMRILANYQDTGSDSSVLRCPLCR. Residues 230–281 form a ZZ-type zinc finger; that stretch reads HLGIPCNNCNQLPIEGRCYKCTECVEYHLCQECFDSCCHSSHAFASREKRNQ. Positions 235, 238, 250, 253, 259, 262, 268, and 271 each coordinate Zn(2+). The segment at 344–386 adopts an RING-type 2 zinc-finger fold; the sequence is CRLCLKSFSFGQYTRLLPCTHKFHRKCIDNWLLHKCNSCPIDR. Positions 589–614 are disordered; sequence SKRQNNSMGKVRQKLGHPPRRPAYPP. Positions 599 to 608 are enriched in basic residues; the sequence is VRQKLGHPPR.

As to quaternary structure, dimer. Interacts with UBE2D1. In terms of processing, polyubiquitinated. Polyubiquitination is followed by degradation via the proteasome. In terms of tissue distribution, expressed only in testis.

It catalyses the reaction S-ubiquitinyl-[E2 ubiquitin-conjugating enzyme]-L-cysteine + [acceptor protein]-L-lysine = [E2 ubiquitin-conjugating enzyme]-L-cysteine + N(6)-ubiquitinyl-[acceptor protein]-L-lysine.. E3 ubiquitin-protein ligase involved in the regulation of Fas-, DR3- and DR4-mediated apoptosis. Functions in conjunction with the UBE2D1, UBE2D3 and UBE2E1 E2 ubiquitin-conjugating enzymes. In Mus musculus (Mouse), this protein is E3 ubiquitin-protein ligase Zswim2 (Zswim2).